A 182-amino-acid chain; its full sequence is Large ribosomal subunit protein uL5 (182 aa).

Part of the 50S ribosomal subunit; part of the 5S rRNA/uL5/uL18/bL25 (TL7) subcomplex; has also been isolated as a complex with 5S rRNA, bL25 (TL7) and DNA binding protein II. Forms a bridge to the 30S subunit in the 70S ribosome, contacting protein uS13; this bridge is straddled by the 5S rRNA. Contacts the P site tRNA.

In terms of biological role, this is one of the proteins that bind and probably mediate the attachment of the 5S RNA into the large ribosomal subunit, where it forms part of the central protuberance. In the 70S ribosome it contacts protein S13 of the 30S subunit (forming bridge B1b) connecting the head of the 30S subunit to the top of the 50S subunit. The bridge itself contacts the P site tRNA and is implicated in movement during ribosome translocation. Also contacts the P site tRNA independently of the intersubunit bridge; the 5S rRNA and some of its associated proteins might help stabilize positioning of ribosome-bound tRNAs. This is Large ribosomal subunit protein uL5 (rplE) from Thermus thermophilus (strain ATCC 27634 / DSM 579 / HB8).